We begin with the raw amino-acid sequence, 670 residues long: Probable ATP-citrate synthase subunit 1 (670 aa).

The segment at 1 to 22 is disordered; it reads MPSATTASTNGANGASASPAPG. Residues 257 to 277 and 308 to 334 contribute to the ATP site; these read LLRY…EVGG and FKTE…KNKS. Glu274 serves as a coordination point for Mg(2+). Catalysis depends on His316, which acts as the Tele-phosphohistidine intermediate. 335–345 is a binding site for CoA; sequence MREAGFYVPDT.

Belongs to the succinate/malate CoA ligase alpha subunit family. As to quaternary structure, composed of two subunits.

Its subcellular location is the cytoplasm. The catalysed reaction is oxaloacetate + acetyl-CoA + ADP + phosphate = citrate + ATP + CoA. Functionally, catalyzes the formation of cytosolic acetyl-CoA, which is mainly used for the biosynthesis of fatty acids and sterols. The chain is Probable ATP-citrate synthase subunit 1 from Neurospora crassa (strain ATCC 24698 / 74-OR23-1A / CBS 708.71 / DSM 1257 / FGSC 987).